We begin with the raw amino-acid sequence, 36 residues long: Photosystem I reaction center subunit VIII (36 aa).

The chain crosses the membrane as a helical span at residues 5-27 (FLPSILVPLVGLVFPAIAIASLF).

The protein belongs to the PsaI family.

It is found in the plastid. The protein localises to the chloroplast thylakoid membrane. Functionally, may help in the organization of the PsaL subunit. The sequence is that of Photosystem I reaction center subunit VIII from Chaetosphaeridium globosum (Charophycean green alga).